A 508-amino-acid polypeptide reads, in one-letter code: 2,3-bisphosphoglycerate-independent phosphoglycerate mutase (508 aa).

Residues aspartate 9 and serine 59 each contribute to the Mn(2+) site. Serine 59 acts as the Phosphoserine intermediate in catalysis. Substrate is bound by residues histidine 120, 149–150, arginine 181, arginine 187, 254–257, and lysine 331; these read RD and RADR. Mn(2+)-binding residues include aspartate 398, histidine 402, aspartate 439, histidine 440, and histidine 456.

The protein belongs to the BPG-independent phosphoglycerate mutase family. The cofactor is Mn(2+).

The enzyme catalyses (2R)-2-phosphoglycerate = (2R)-3-phosphoglycerate. Its pathway is carbohydrate degradation; glycolysis; pyruvate from D-glyceraldehyde 3-phosphate: step 3/5. In terms of biological role, catalyzes the interconversion of 2-phosphoglycerate and 3-phosphoglycerate. This Halobacterium salinarum (strain ATCC 700922 / JCM 11081 / NRC-1) (Halobacterium halobium) protein is 2,3-bisphosphoglycerate-independent phosphoglycerate mutase.